A 490-amino-acid chain; its full sequence is Pleckstrin homology domain-containing family O member 2 (490 aa).

The PH domain maps to 18–119; sequence MVDKAGWIKK…WIKALNEGIN (102 aa). Phosphoserine is present on residues S164 and S167. The interval 173–402 is disordered; the sequence is LDLDVPDSGP…DLLGEGPRHP (230 aa). Low complexity predominate over residues 230–243; sequence APTPVSASSEVSPE. T232 carries the phosphothreonine modification. Residues S235, S237, and S238 each carry the phosphoserine modification. Positions 244 to 257 are enriched in acidic residues; the sequence is SQEDSETPAEEDSG. S273 is subject to Phosphoserine. The span at 277–297 shows a compositional bias: low complexity; that stretch reads PSPQEAPAAESAEPSQAPCSE. T298 and T311 each carry phosphothreonine. Phosphoserine is present on residues S390 and S468. Residues 439-481 adopt a coiled-coil conformation; the sequence is SAETLLSQAVEQLRQATQVLQEMRDLGELSQEAPGLREKRKEL.

This Homo sapiens (Human) protein is Pleckstrin homology domain-containing family O member 2 (PLEKHO2).